Here is a 162-residue protein sequence, read N- to C-terminus: Protein S40-4 (162 aa).

Belongs to the senescence regulator S40 family.

The protein resides in the cytoplasm. The protein is Protein S40-4 of Arabidopsis thaliana (Mouse-ear cress).